Here is a 355-residue protein sequence, read N- to C-terminus: Protein RecA (355 aa).

Position 65–72 (65–72 (GPESSGKT)) interacts with ATP.

The protein belongs to the RecA family.

The protein localises to the cytoplasm. Its function is as follows. Can catalyze the hydrolysis of ATP in the presence of single-stranded DNA, the ATP-dependent uptake of single-stranded DNA by duplex DNA, and the ATP-dependent hybridization of homologous single-stranded DNAs. It interacts with LexA causing its activation and leading to its autocatalytic cleavage. This Pseudomonas putida (Arthrobacter siderocapsulatus) protein is Protein RecA.